The primary structure comprises 577 residues: Aspartate--tRNA(Asp/Asn) ligase (577 aa).

Glu-171 provides a ligand contact to L-aspartate. The segment at 195–198 is aspartate; the sequence is QLFK. Arg-217 is an L-aspartate binding site. Residues 217–219 and Gln-226 each bind ATP; that span reads RDE. Position 444 (His-444) interacts with L-aspartate. Residue Glu-474 participates in ATP binding. Arg-481 lines the L-aspartate pocket. 526 to 529 contacts ATP; that stretch reads GFDR.

The protein belongs to the class-II aminoacyl-tRNA synthetase family. Type 1 subfamily. Homodimer.

The protein resides in the cytoplasm. The catalysed reaction is tRNA(Asx) + L-aspartate + ATP = L-aspartyl-tRNA(Asx) + AMP + diphosphate. In terms of biological role, aspartyl-tRNA synthetase with relaxed tRNA specificity since it is able to aspartylate not only its cognate tRNA(Asp) but also tRNA(Asn). Reaction proceeds in two steps: L-aspartate is first activated by ATP to form Asp-AMP and then transferred to the acceptor end of tRNA(Asp/Asn). In Helicobacter pylori (strain HPAG1), this protein is Aspartate--tRNA(Asp/Asn) ligase.